A 924-amino-acid chain; its full sequence is Alpha-actinin, sarcomeric (924 aa).

Positions 1-250 (MMMENGLSME…IMTYVSCYYH (250 aa)) are actin-binding. Calponin-homology (CH) domains follow at residues 34–138 (KQQK…LRFA) and 147–253 (MTAK…HAFQ). Spectrin repeat units lie at residues 251–395 (AFQG…TVSD), 396–510 (ISNS…RCQR), 511–631 (ICDQ…TAND), and 632–744 (MTRK…TMET). EF-hand domains lie at 778–813 (EQLN…LGYS) and 819–854 (QGDL…ESTD). Asp791, Asn793, Thr795, Arg797, and Glu802 together coordinate Ca(2+).

The protein belongs to the alpha-actinin family. Homodimer; antiparallel. Interacts with Smn; the interaction occurs in adult thoracic tissues. Larval muscle isoform is expressed in the larval body wall, adult muscles of the head and abdomen and supercontractile muscles of the larva and adult. Adult muscle isoform accumulates within adult fibrillar and tubular muscles.

It localises to the cytoplasm. Its subcellular location is the myofibril. It is found in the sarcomere. The protein resides in the z line. F-actin cross-linking protein which is thought to anchor actin to a variety of intracellular structures. This is a bundling protein. This is Alpha-actinin, sarcomeric (Actn) from Drosophila melanogaster (Fruit fly).